A 452-amino-acid polypeptide reads, in one-letter code: Pup--protein ligase (452 aa).

Residue Glu-9 coordinates Mg(2+). Arg-53 serves as a coordination point for ATP. Residue Tyr-55 participates in Mg(2+) binding. Asp-57 acts as the Proton acceptor in catalysis. Glu-63 provides a ligand contact to Mg(2+). ATP contacts are provided by Thr-66 and Trp-419.

It belongs to the Pup ligase/Pup deamidase family. Pup-conjugating enzyme subfamily.

It carries out the reaction ATP + [prokaryotic ubiquitin-like protein]-L-glutamate + [protein]-L-lysine = ADP + phosphate + N(6)-([prokaryotic ubiquitin-like protein]-gamma-L-glutamyl)-[protein]-L-lysine.. Its pathway is protein degradation; proteasomal Pup-dependent pathway. It participates in protein modification; protein pupylation. Functionally, catalyzes the covalent attachment of the prokaryotic ubiquitin-like protein modifier Pup to the proteasomal substrate proteins, thereby targeting them for proteasomal degradation. This tagging system is termed pupylation. The ligation reaction involves the side-chain carboxylate of the C-terminal glutamate of Pup and the side-chain amino group of a substrate lysine. In Rhodococcus jostii (strain RHA1), this protein is Pup--protein ligase.